Reading from the N-terminus, the 299-residue chain is Glutamate formimidoyltransferase (299 aa).

Catalysis depends on histidine 82, which acts as the For formimidoyltransferase activity. Residue 163–172 (GDRKIHPTAG) participates in folate binding.

This sequence belongs to the formiminotransferase family.

Its subcellular location is the cytoplasm. The enzyme catalyses (6S)-5-formyl-5,6,7,8-tetrahydrofolate + L-glutamate = N-formyl-L-glutamate + (6S)-5,6,7,8-tetrahydrofolate + H(+). The catalysed reaction is 5-formimidoyltetrahydrofolate + L-glutamate = N-formimidoyl-L-glutamate + (6S)-5,6,7,8-tetrahydrofolate. It catalyses the reaction (6S)-5-formyl-5,6,7,8-tetrahydrofolate + ATP = (6R)-5,10-methenyltetrahydrofolate + ADP + phosphate. It functions in the pathway amino-acid degradation; L-histidine degradation into L-glutamate; L-glutamate from N-formimidoyl-L-glutamate (transferase route): step 1/1. Its pathway is one-carbon metabolism; tetrahydrofolate interconversion. Catalyzes the transfer of the formyl group from N-formylglutamate to tetrahydrofolate (THF) to yield 5-formyltetrahydrofolate (5-CHO-THF) and glutamate (Glu). The triglutamate form of 5-CHO-THF (5-CHO-THF-Glu3) can also be used as substrate. It can also catalyze the transfer of the formimino group from N-formiminoglutamate to tetrahydrofolate (THF) to yield 5-formiminotetrahydrofolate (5-NH=CH-THF) and glutamate (Glu). It can replace YgfA to catalyze the irreversible ATP-dependent transformation of 5-CHO-THF to form 5,10-methenyltetrahydrofolate (5,10-CH=THF). In Streptococcus pyogenes serotype M1, this protein is Glutamate formimidoyltransferase.